The chain runs to 540 residues: Chaperonin GroEL (540 aa).

Residues 29–32 (TLGP), 86–90 (DGTTT), glycine 413, 476–478 (NAA), and aspartate 492 each bind ATP.

Belongs to the chaperonin (HSP60) family. In terms of assembly, forms a cylinder of 14 subunits composed of two heptameric rings stacked back-to-back. Interacts with the co-chaperonin GroES.

It localises to the cytoplasm. The catalysed reaction is ATP + H2O + a folded polypeptide = ADP + phosphate + an unfolded polypeptide.. Functionally, together with its co-chaperonin GroES, plays an essential role in assisting protein folding. The GroEL-GroES system forms a nano-cage that allows encapsulation of the non-native substrate proteins and provides a physical environment optimized to promote and accelerate protein folding. The sequence is that of Chaperonin GroEL from Streptococcus gordonii (strain Challis / ATCC 35105 / BCRC 15272 / CH1 / DL1 / V288).